The primary structure comprises 571 residues: External alternative NAD(P)H-ubiquinone oxidoreductase B1, mitochondrial (571 aa).

The N-terminal 35 residues, 1–35 (MTLLSSLGRASRSAPLASKLLLLGTLSGGSIVAYA), are a transit peptide targeting the mitochondrion. 51 to 81 (KVVVLGTGWAGISFLKDLDITSYDVQVVSPQ) lines the FAD pocket. An NAD(+)-binding site is contributed by 215–251 (LHFVIVGGGPTGVEFAAELHDFIIEDITKIYPSVKEL). The region spanning 372–407 (KILGDIANIFKAADADNSGTLTMEELEGVVDDIIVR) is the EF-hand domain. The Ca(2+) site is built by Asp-385, Asp-387, Ser-389, Thr-391, and Glu-396. Positions 562–571 (YIFGRDSSRI) match the Microbody targeting signal motif.

This sequence belongs to the NADH dehydrogenase family. FAD is required as a cofactor. As to expression, expressed in seedlings, roots, cotyledons, leaves, stems, buds and flowers.

The protein localises to the mitochondrion inner membrane. It is found in the peroxisome. The enzyme catalyses a quinone + NADH + H(+) = a quinol + NAD(+). The catalysed reaction is a ubiquinone + NADH + H(+) = a ubiquinol + NAD(+). Its activity is regulated as follows. Activity is calcium-dependent with a more pronounced effect at higher pH. Its function is as follows. Alternative NADH-ubiquinone oxidoreductase which catalyzes the oxidation of mitochondrial NADH does not translocate protons across the inner mitochondrial membrane. Calcium-dependent NAD(P)H dehydrogenase. Binds calcium ions. This is External alternative NAD(P)H-ubiquinone oxidoreductase B1, mitochondrial (NDB1) from Arabidopsis thaliana (Mouse-ear cress).